Consider the following 783-residue polypeptide: DNA polymerase II (783 aa).

This sequence belongs to the DNA polymerase type-B family.

It carries out the reaction DNA(n) + a 2'-deoxyribonucleoside 5'-triphosphate = DNA(n+1) + diphosphate. Its activity is regulated as follows. DNA polymerase II activity is regulated by the lexA gene during the SOS response. Functionally, thought to be involved in DNA repair and/or mutagenesis. Its processivity is enhanced by the beta sliding clamp (dnaN) and clamp loader. The protein is DNA polymerase II (polB) of Escherichia coli (strain K12).